Consider the following 883-residue polypeptide: MNEQYSALRSNVSMLGKVLGETIKDALGEHILERVETIRKLSKSSRAGNDANRQELLTTLQNLSNDELLPVARAFSQFLNLANTAEQYHSISPKGEAASNPEVIARTLRKLKNQPELSEDTIKKAVESLSLELVLTAHPTEITRRTLIHKMVEVNACLKQLDNKDIADYEHNQLMRRLRQLIAQSWHTDEIRKLRPSPVDEAKWGFAVVENSLWQGVPNYLRELNEQLEENLGYKLPVEFVPVRFTSWMGGDRDGNPNVTADITRHVLLLSRWKATDLFLKDIQVLVSELSMVEATPELLALVGEEGAAEPYRYLMKNLRSRLMATQAWLEARLKGEELPKPEGLLTQNEELWEPLYACYQSLQACGMGIIANGDLLDTLRRVKCFGVPLVRIDIRQESTRHTEALGELTRYLGIGDYESWSEADKQAFLIRELNSKRPLLPRNWQPSAETREVLDTCQVIAEAPQGSIAAYVISMAKTPSDVLAVHLLLKEAGIGFAMPVAPLFETLDDLNNANDVMTQLLNIDWYRGLIQGKQMVMIGYSDSAKDAGVMAASWAQYQAQDALIKTCEKAGIELTLFHGRGGSIGRGGAPAHAALLSQPPGSLKGGLRVTEQGEMIRFKYGLPEITVSSLSLYTGAILEANLLPPPEPKESWRRIMDELSVISCDVYRGYVRENKDFVPYFRSATPEQELGKLPLGSRPAKRRPTGGVESLRAIPWIFAWTQNRLMLPAWLGAGTALQKVVEDGKQNELEAMCRDWPFFSTRLGMLEMVFAKADLWLAEYYDQRLVDKALWPLGKELRNLQEEDIKVVLAIANDSHLMADLPWIAESIQLRNIYTDPLNVLQAELLHRSRQAEKEGQEPDPRVEQALMVTIAGIAAGMRNTG.

Catalysis depends on residues His138 and Lys546.

The protein belongs to the PEPCase type 1 family. Mg(2+) serves as cofactor.

It catalyses the reaction oxaloacetate + phosphate = phosphoenolpyruvate + hydrogencarbonate. Functionally, forms oxaloacetate, a four-carbon dicarboxylic acid source for the tricarboxylic acid cycle. The polypeptide is Phosphoenolpyruvate carboxylase (Escherichia coli O45:K1 (strain S88 / ExPEC)).